Reading from the N-terminus, the 201-residue chain is Large ribosomal subunit protein uL4 (201 aa).

The segment at 44–68 is disordered; the sequence is KAQKTRSEVAGTTKKSKKQKGGGAR.

This sequence belongs to the universal ribosomal protein uL4 family. As to quaternary structure, part of the 50S ribosomal subunit.

In terms of biological role, one of the primary rRNA binding proteins, this protein initially binds near the 5'-end of the 23S rRNA. It is important during the early stages of 50S assembly. It makes multiple contacts with different domains of the 23S rRNA in the assembled 50S subunit and ribosome. Forms part of the polypeptide exit tunnel. This is Large ribosomal subunit protein uL4 from Xanthomonas axonopodis pv. citri (strain 306).